A 132-amino-acid chain; its full sequence is Small ribosomal subunit protein uS11c (132 aa).

It belongs to the universal ribosomal protein uS11 family. Part of the 30S ribosomal subunit.

It is found in the plastid. The protein localises to the chloroplast. The chain is Small ribosomal subunit protein uS11c from Gnetum parvifolium (Small-leaved jointfir).